Here is a 133-residue protein sequence, read N- to C-terminus: MQRVTITLDDDLLETLDNLSQRRGYNNRSEAIRDILRGALAQEATQEHGTQGFAVLSYVYEHEKRDLASRIVSTQHHHHDLSVATLHVHINHDDCLEIAVLKGDMGDVQHFADDVIAQRGVRHGHLQCLPKED.

Histidine 76, histidine 87, histidine 89, and cysteine 95 together coordinate Ni(2+).

Belongs to the transcriptional regulatory CopG/NikR family. As to quaternary structure, homotetramer. The cofactor is Ni(2+).

Its function is as follows. Transcriptional repressor of the nikABCDE operon. Is active in the presence of excessive concentrations of intracellular nickel. The polypeptide is Nickel-responsive regulator (Salmonella paratyphi A (strain ATCC 9150 / SARB42)).